Reading from the N-terminus, the 226-residue chain is uncharacterized protein (226 aa).

A coiled-coil region spans residues 121-163 (TVDELIKTIEKELNKVKKSRKNREKKTNEVEEIIEELIEEDDI).

This is an uncharacterized protein from Methanocaldococcus jannaschii (strain ATCC 43067 / DSM 2661 / JAL-1 / JCM 10045 / NBRC 100440) (Methanococcus jannaschii).